The chain runs to 215 residues: Cytochrome b6 (215 aa).

The helical transmembrane segment at 32-52 (IFYCLGGITLTCFLVQVATGF) threads the bilayer. Cysteine 35 serves as a coordination point for heme c. Heme b contacts are provided by histidine 86 and histidine 100. The next 3 membrane-spanning stretches (helical) occupy residues 90 to 110 (ASMM…TGGF), 116 to 136 (LTWV…VTGY), and 186 to 206 (LHTF…FPMI). Heme b is bound by residues histidine 187 and histidine 202.

Belongs to the cytochrome b family. PetB subfamily. As to quaternary structure, the 4 large subunits of the cytochrome b6-f complex are cytochrome b6, subunit IV (17 kDa polypeptide, PetD), cytochrome f and the Rieske protein, while the 4 small subunits are PetG, PetL, PetM and PetN. The complex functions as a dimer. The cofactor is heme b. Heme c serves as cofactor.

The protein localises to the plastid. The protein resides in the chloroplast thylakoid membrane. Component of the cytochrome b6-f complex, which mediates electron transfer between photosystem II (PSII) and photosystem I (PSI), cyclic electron flow around PSI, and state transitions. This chain is Cytochrome b6, found in Vitis vinifera (Grape).